Reading from the N-terminus, the 369-residue chain is Actin-related protein 2/3 complex subunit 1B-A (369 aa).

WD repeat units follow at residues 6-45 (FLLE…WSKI), 50-89 (EHNG…WKPT), 94-135 (RINR…WVCK), 140-179 (PIRS…VEER), 200-239 (SSCG…RVTS), 242-282 (TDTL…LSFG), and 321-364 (LHKN…SAMK).

This sequence belongs to the WD repeat ARPC1 family. Component of the Arp2/3 complex composed of actr2/arp2, actr3/arp3, arpc1 (arpc1a or arpc1b), arpc2, arpc3, arpc4 and arpc5.

The protein localises to the cytoplasm. It localises to the cytoskeleton. It is found in the nucleus. Functionally, component of the Arp2/3 complex, a multiprotein complex that mediates actin polymerization upon stimulation by nucleation-promoting factor (NPF). The Arp2/3 complex mediates the formation of branched actin networks in the cytoplasm, providing the force for cell motility. In addition to its role in the cytoplasmic cytoskeleton, the Arp2/3 complex also promotes actin polymerization in the nucleus, thereby regulating gene transcription and repair of damaged DNA. The Arp2/3 complex promotes homologous recombination (HR) repair in response to DNA damage by promoting nuclear actin polymerization, leading to drive motility of double-strand breaks (DSBs). This is Actin-related protein 2/3 complex subunit 1B-A (arpc1b-a) from Xenopus laevis (African clawed frog).